We begin with the raw amino-acid sequence, 560 residues long: Arginine--tRNA ligase (560 aa).

A 'HIGH' region motif is present at residues 122-132; sequence ANPNGPLHVGH.

Belongs to the class-I aminoacyl-tRNA synthetase family.

The protein resides in the cytoplasm. It catalyses the reaction tRNA(Arg) + L-arginine + ATP = L-arginyl-tRNA(Arg) + AMP + diphosphate. This chain is Arginine--tRNA ligase, found in Methanosphaera stadtmanae (strain ATCC 43021 / DSM 3091 / JCM 11832 / MCB-3).